We begin with the raw amino-acid sequence, 149 residues long: uncharacterized protein (149 aa).

This is an uncharacterized protein from Acanthamoeba polyphaga (Amoeba).